Reading from the N-terminus, the 822-residue chain is Serine/threonine-protein phosphatase 4 regulatory subunit 3 (822 aa).

A WH1 domain is found at 1 to 100; the sequence is MTDTRRRVKV…DEIWEKICQV (100 aa). Positions 744-822 are disordered; sequence TSQLSASGHP…PLTKKARLGS (79 aa). Over residues 761-774 the composition is skewed to low complexity; that stretch reads SPGSPESPGSVSKS. Positions 793–808 are enriched in acidic residues; the sequence is YPDDDEEDDDNDEEEK.

The protein belongs to the SMEK family. In terms of assembly, serine/threonine-protein phosphatase 4 (PP4) occurs in different assemblies of the catalytic and one or more regulatory subunits.

Its function is as follows. Regulatory subunit of serine/threonine-protein phosphatase 4. The chain is Serine/threonine-protein phosphatase 4 regulatory subunit 3 (smek1) from Xenopus laevis (African clawed frog).